A 241-amino-acid chain; its full sequence is Fatty acid metabolism regulator protein (241 aa).

One can recognise an HTH gntR-type domain in the interval 11–79; it reads QSPAALAEEY…HGKPTKVNNI (69 aa). Residues 39-58 constitute a DNA-binding region (H-T-H motif); it reads ERDLADKIGVTRTTLREVLQ.

Homodimer.

The protein localises to the cytoplasm. Multifunctional regulator of fatty acid metabolism. This Haemophilus influenzae (strain PittEE) protein is Fatty acid metabolism regulator protein.